Consider the following 411-residue polypeptide: Peptidase T (411 aa).

Residue His78 participates in Zn(2+) binding. Asp80 is a catalytic residue. Asp140 provides a ligand contact to Zn(2+). Glu173 acts as the Proton acceptor in catalysis. Residues Glu174, Asp196, and His379 each coordinate Zn(2+).

The protein belongs to the peptidase M20B family. Zn(2+) is required as a cofactor.

The protein localises to the cytoplasm. It catalyses the reaction Release of the N-terminal residue from a tripeptide.. Its function is as follows. Cleaves the N-terminal amino acid of tripeptides. In Yersinia pestis bv. Antiqua (strain Antiqua), this protein is Peptidase T.